Consider the following 122-residue polypeptide: Large ribosomal subunit protein uL14 (122 aa).

The protein belongs to the universal ribosomal protein uL14 family. In terms of assembly, part of the 50S ribosomal subunit. Forms a cluster with proteins L3 and L19. In the 70S ribosome, L14 and L19 interact and together make contacts with the 16S rRNA in bridges B5 and B8.

Binds to 23S rRNA. Forms part of two intersubunit bridges in the 70S ribosome. In Helicobacter pylori (strain J99 / ATCC 700824) (Campylobacter pylori J99), this protein is Large ribosomal subunit protein uL14.